A 63-amino-acid polypeptide reads, in one-letter code: Large ribosomal subunit protein uL29 (63 aa).

It belongs to the universal ribosomal protein uL29 family.

This is Large ribosomal subunit protein uL29 from Listeria innocua serovar 6a (strain ATCC BAA-680 / CLIP 11262).